The primary structure comprises 371 residues: Probable RNA 3'-terminal phosphate cyclase-like protein (371 aa).

It belongs to the RNA 3'-terminal cyclase family. Type 2 subfamily. Part of the small subunit (SSU) processome, composed of more than 70 proteins and the RNA chaperone small nucleolar RNA (snoRNA) U3.

It is found in the nucleus. The protein resides in the nucleolus. Its function is as follows. Part of the small subunit (SSU) processome, first precursor of the small eukaryotic ribosomal subunit. During the assembly of the SSU processome in the nucleolus, many ribosome biogenesis factors, an RNA chaperone and ribosomal proteins associate with the nascent pre-rRNA and work in concert to generate RNA folding, modifications, rearrangements and cleavage as well as targeted degradation of pre-ribosomal RNA by the RNA exosome. Does not have cyclase activity. The protein is Probable RNA 3'-terminal phosphate cyclase-like protein (rcl1) of Dictyostelium discoideum (Social amoeba).